The following is a 576-amino-acid chain: RNA-binding post-transcriptional regulator cip2 (576 aa).

Residues 232 to 310 (TAIVIKNIPF…RRLRVEWKRQ (79 aa)) form the RRM domain. In terms of domain architecture, R3H spans 355–420 (DPAILNVYSH…AKQVVITMPS (66 aa)).

Interacts with csx1. In terms of processing, phosphorylated by sty1.

It localises to the cytoplasm. Functionally, regulates global gene expression after oxidative stress. Interacts and stabilizes mRNAs and may regulate their transition between different cytoplasmic components after oxidative stress. In Schizosaccharomyces pombe (strain 972 / ATCC 24843) (Fission yeast), this protein is RNA-binding post-transcriptional regulator cip2 (cip2).